We begin with the raw amino-acid sequence, 185 residues long: MARVYVGNLDPRVTARELEDEFRVFGVLRSVWVARKPPGFAFIDFDDRRDAQDAIRDIDGKNGWRVELSRNASSGRGGRDRYGSSESKCYECGETGHFARECRLRIGSGGLGSGRRRSRSRSRSRSPRYRRSPSYGRRSYSPAGRSPRRRSVSPARARSYSRSPQYNRGRDESPAYDNGYRRSRS.

The 72-residue stretch at 2 to 73 folds into the RRM domain; sequence ARVYVGNLDP…WRVELSRNAS (72 aa). The segment at 87-104 adopts a CCHC-type zinc-finger fold; it reads SKCYECGETGHFARECRL. A disordered region spans residues 109–185; the sequence is GGLGSGRRRS…YDNGYRRSRS (77 aa). A compositionally biased stretch (basic residues) spans 114–131; sequence GRRRSRSRSRSRSPRYRR. Low complexity-rich tracts occupy residues 132-145 and 152-163; these read SPSY…PAGR and VSPARARSYSRS.

This sequence belongs to the splicing factor SR family. Post-translationally, extensively phosphorylated on serine residues in the RS domain. As to expression, expressed in roots, leaves and immature seeds.

It is found in the nucleus. Functionally, involved in pre-mRNA splicing. In Oryza sativa subsp. japonica (Rice), this protein is Serine/arginine-rich splicing factor RSZ21A (RSZ21A).